Consider the following 521-residue polypeptide: Cytochrome P450 monooxygenase gloO (521 aa).

The signal sequence occupies residues 1–26 (MIAALFTTNLQLGAVGVFIFALLAFA). C464 provides a ligand contact to heme.

This sequence belongs to the cytochrome P450 family. Heme serves as cofactor.

The protein operates within mycotoxin biosynthesis. Cytochrome P450 monooxygenase; part of the gene cluster that mediates the biosynthesis of pneumocandins, lipohexapeptides of the echinocandin family that prevent fungal cell wall formation by non-competitive inhibition of beta-1,3-glucan synthase. The 10,12-dimethylmyristoyl side chain is synthesized by the reducing polyketide synthase gloL/GLPKS4. The thioesterase gloN/GLHYD exclusively interacts with gloL/GLPKS4 to maintain turnover of the polyketide side chain. The 10R,12S-dimethylmyristic acid is then transferred to the first thiolation domain of the nonribosomal peptide synthetase gloA/GLNRPS4 by the acyl-AMP ligase gloD/GLligase, followed by its acylation to L-ornithine to trigger elongation of the cyclic hexapeptide. L-ornithine, 4R-hydroxyl-L-proline (generated from L-proline by the dioxygenase gloF/GLOXY2), 3S-hydroxyl-L-homotyrosine (generated by gloG/GLHtyB, gloH/GLHtyA, gloI/GLHtyC, gloJ/GLHtyD and hydroxylated at C-3 by the dioxygenase gloM/GLOXY1), 3R-hydroxyl-L-glutamine (generated from L-glutamine probably by the dioxygenase gloE/GLOXY3) and 3S-hydroxyl-L-proline (generated from L-proline by the dioxygenase gloF/GLOXY2 to yield pneumocandin B0), or 3S-hydroxyl-4S-methyl-L-proline (generated from L-leucine by the dioxygenase gloC/GLOXY4 to yield pneumocandin A0) are sequentially added to the growing chain. The last C domain of gloA/GLNRPS4 is proposed to be responsible for cyclization by condensation to form the peptide bond between L-ornithine and 3S-hydroxyl-4S-methyl-L-proline (for pneumocandin A0) or 3S-hydroxyl-L-proline (for pneumocandin B0). Finally, the subsequent C-4 hydroxylation of 3S-hydroxyl-L-homotyrosine and L-ornithine dihydroxylation at C-4 and C-5 are performed by the cytochrome P450 monooxygenases gloP/GLP450-1 and gloO/GLP450-2, respectively. The polypeptide is Cytochrome P450 monooxygenase gloO (Glarea lozoyensis (strain ATCC 20868 / MF5171)).